Reading from the N-terminus, the 929-residue chain is Protein unc-45 homolog A (929 aa).

3 TPR repeats span residues 6–39, 43–76, and 77–110; these read VEQLRKEGNELFKCGDYGGALAAYTQALGLDATP, AVLHRNRAACYLKLEDYDKAETEASKAIEKDGGD, and VKALYRRSQALEKLGRLDQAVLDLQRCVSLEPKN. At Lys-55 the chain carries N6-acetyllysine. N6-acetyllysine is present on Lys-468.

In terms of assembly, interacts with PGR isoforms A and B as well as with NR3C1 in the absence of ligand, and with HSP90AB1. Binding to HSP90AB1 involves 2 UNC45A monomers per HSP90AB1 dimer.

Its subcellular location is the cytoplasm. It localises to the perinuclear region. It is found in the nucleus. May act as co-chaperone for HSP90 (Potential). Prevents the stimulation of HSP90AB1 ATPase activity by AHSA1. Positive factor in promoting PGR function in the cell. May be necessary for proper folding of myosin (Potential). Necessary for normal cell proliferation. Necessary for normal myotube formation and myosin accumulation during muscle cell development. May play a role in erythropoiesis in stroma cells in the spleen. This Pongo abelii (Sumatran orangutan) protein is Protein unc-45 homolog A (UNC45A).